A 481-amino-acid chain; its full sequence is Alpha-L-arabinofuranosidase 43 (481 aa).

The signal sequence occupies residues 1 to 19 (MRFSVFTAAIAAAFSACCA). Residues Asn-158, Asn-176, and Asn-365 are each glycosylated (N-linked (GlcNAc...) asparagine).

This sequence belongs to the glycosyl hydrolase 43 family.

The protein localises to the secreted. The catalysed reaction is Hydrolysis of terminal non-reducing alpha-L-arabinofuranoside residues in alpha-L-arabinosides.. Its activity is regulated as follows. Activity is significantly inhibited by SDS and partially inhibited by Ag(+), Fe(3+) and beta-mercaptoethanol. In terms of biological role, alpha-L-arabinofuranosidase specific for the cleavage of alpha-1,3-linkage. Shows high activity against 4-nitrophenyl alpha-L-arabinofuranoside, debranched arabinan, and sugar beet arabinan. This is Alpha-L-arabinofuranosidase 43 from Humicola insolens (Soft-rot fungus).